A 249-amino-acid polypeptide reads, in one-letter code: MADS-box transcription factor 18 (249 aa).

The 61-residue stretch at 1 to 61 folds into the MADS-box domain; that stretch reads MGRGPVQLRR…GKLYEFSSHS (61 aa). The 92-residue stretch at 88-179 folds into the K-box domain; it reads QENWGDEYGI…KLMETEKEKN (92 aa). Residues 184–249 form a disordered region; that stretch reads NTNREEQNGA…PPWMLRTSHT (66 aa). Polar residues predominate over residues 210–236; that stretch reads PTTNNSQSQPRGSGESEAQPSPAQAGN.

Widely expressed. Transcripts accumulate to higher levels in organs that retain meristematic characteristics: in the apical meristem and in the meristematic leaf primordia formed on its flank; in the developing panicle at the early stage of rachis-branch primordia differentiation; in the procambium of the rachis branches and in all floral organ primordia.

The protein resides in the nucleus. Functionally, probable transcription factor. The polypeptide is MADS-box transcription factor 18 (MADS18) (Oryza sativa subsp. indica (Rice)).